The chain runs to 245 residues: Cell division protein ZapD (245 aa).

Belongs to the ZapD family. As to quaternary structure, interacts with FtsZ.

Its subcellular location is the cytoplasm. Its function is as follows. Cell division factor that enhances FtsZ-ring assembly. Directly interacts with FtsZ and promotes bundling of FtsZ protofilaments, with a reduction in FtsZ GTPase activity. The protein is Cell division protein ZapD of Photobacterium profundum (strain SS9).